Reading from the N-terminus, the 476-residue chain is Aspartyl/glutamyl-tRNA(Asn/Gln) amidotransferase subunit B (476 aa).

Belongs to the GatB/GatE family. GatB subfamily. Heterotrimer of A, B and C subunits.

It carries out the reaction L-glutamyl-tRNA(Gln) + L-glutamine + ATP + H2O = L-glutaminyl-tRNA(Gln) + L-glutamate + ADP + phosphate + H(+). The catalysed reaction is L-aspartyl-tRNA(Asn) + L-glutamine + ATP + H2O = L-asparaginyl-tRNA(Asn) + L-glutamate + ADP + phosphate + 2 H(+). Functionally, allows the formation of correctly charged Asn-tRNA(Asn) or Gln-tRNA(Gln) through the transamidation of misacylated Asp-tRNA(Asn) or Glu-tRNA(Gln) in organisms which lack either or both of asparaginyl-tRNA or glutaminyl-tRNA synthetases. The reaction takes place in the presence of glutamine and ATP through an activated phospho-Asp-tRNA(Asn) or phospho-Glu-tRNA(Gln). This Listeria welshimeri serovar 6b (strain ATCC 35897 / DSM 20650 / CCUG 15529 / CIP 8149 / NCTC 11857 / SLCC 5334 / V8) protein is Aspartyl/glutamyl-tRNA(Asn/Gln) amidotransferase subunit B.